A 322-amino-acid polypeptide reads, in one-letter code: Pyrroline-5-carboxylate reductase (322 aa).

The next 2 membrane-spanning stretches (helical) occupy residues 9–29 (YPNV…VGLL) and 117–137 (ILIS…LHFW). A disordered region spans residues 302-322 (LSQSAGSHGEDNTTDSKTSRA). Residue Asn313 is glycosylated (N-linked (GlcNAc...) asparagine).

Belongs to the pyrroline-5-carboxylate reductase family.

It is found in the membrane. It catalyses the reaction L-proline + NADP(+) = (S)-1-pyrroline-5-carboxylate + NADPH + 2 H(+). The enzyme catalyses L-proline + NAD(+) = (S)-1-pyrroline-5-carboxylate + NADH + 2 H(+). It participates in alkaloid biosynthesis. Functionally, pyrroline-5-carboxylate reductase; part of the gene cluster that mediates the biosynthesis of paraherquamide, a fungal indole alkaloid that belongs to a family of natural products containing a characteristic bicyclo[2.2.2]diazaoctane core. The first steps in the biosynthesis of paraherquamide is the production of the beta-methyl-proline precursor from L-isoleucine. They require oxidation of a terminally hydroxylated L-isoleucine to the corresponding aldehyde by enzymes which have still to be identified. Spontaneous cyclization and dehydration would yield the 4-methyl pyrolline-5-carboxylic acid, which is then reduced by the pyrroline-5-carboxylate reductase phqD leading to the beta-methyl-proline precursor. The next step of paraherquamide biosynthesis involves coupling of beta-methyl-proline and L-tryptophan by the bimodular NRPS phqB, to produce a monooxopiperazine intermediate. The reductase (R) domain of phqB utilizes NADPH for hydride transfer to reduce the thioester bond of the T domain-tethered linear dipeptide to a hemithioaminal intermediate, which spontaneously cleaves the C-S bond to release the aldehyde product. This compound undergoes spontaneous cyclization and dehydration to give a dienamine which is reverse prenylated at C-2 by the reverse prenyltransferase phqJ. The other prenyltransferase present in the cluster, phqI may be a redundant gene in the pathway. During biosynthetic assembly, the key step to produce the polycyclic core is catalyzed by the bifunctional reductase and intramolecular [4+2] Diels-Alderase, phqE, resulting in formation of the [2.2.2] diazaoctane intermediate preparaherquamide. Following formation of preparaherquamide, an indole 2,3-epoxidation-initiated pinacol-like rearrangement is catalyzed by the phqK FAD-dependent monooxygenase. The prenyltransferase phqA, the cytochrome P450 monooxygenase phqL, and the FAD-linked oxidoreductase phqH (or the cytochrome P450 monooxygenase phqM), are proposed to be involved in the formation of the pyran ring. The FAD-dependent monooxygenase phqK is likely responsible for generation of the spiro-oxindole, and the N-methylation is likely mediated by the phqN methyltransferase leading to the isolable natural product paraherquamide F. However, the order of these biosynthetic steps has still to be determined. In late-stage paraherquamide biosynthesis, the third P450 monooxygenase, phqO, is probably responsible for the C-14 hydroxylation, transforming paraherquamide F to paraherquamide G, and paraherquamide E to the final product paraherquamide A. The expansion from the 6-membered ring pyran (in paraherquamides F and G) to the 7-membered dioxepin ring (in paraherquamides A and E) represents a poorly understood but intriguing process that probably involves the 2-oxoglutarate-dependent dioxygenase phqC. Finally, the remaining members of the paraherquamide cluster, including phqI as well as phqM (or phqH), do not have a clearly prescribed role and appear to be redundant. The polypeptide is Pyrroline-5-carboxylate reductase (Penicillium fellutanum).